We begin with the raw amino-acid sequence, 212 residues long: Ribosomal RNA small subunit methyltransferase G (212 aa).

S-adenosyl-L-methionine is bound by residues Gly73, 127 to 128 (IE), and Arg143.

Belongs to the methyltransferase superfamily. RNA methyltransferase RsmG family.

It localises to the cytoplasm. It carries out the reaction guanosine(527) in 16S rRNA + S-adenosyl-L-methionine = N(7)-methylguanosine(527) in 16S rRNA + S-adenosyl-L-homocysteine. Specifically methylates the N7 position of guanine in position 527 of 16S rRNA. This chain is Ribosomal RNA small subunit methyltransferase G, found in Methylobacterium nodulans (strain LMG 21967 / CNCM I-2342 / ORS 2060).